Consider the following 78-residue polypeptide: MMKKLIQLSFTVMIIFTILVLGVVANEGLGKPKKQCNEILKQSNCVAAECDSMCVKKRGKGAGYCSPSKKCYCYYHCP.

The N-terminal stretch at 1 to 25 is a signal peptide; sequence MMKKLIQLSFTVMIIFTILVLGVVA. 4 cysteine pairs are disulfide-bonded: Cys36/Cys77, Cys45/Cys65, Cys50/Cys71, and Cys54/Cys73.

The protein belongs to the DEFL family.

It is found in the secreted. This is Defensin-like protein 149 (LCR5) from Arabidopsis thaliana (Mouse-ear cress).